Consider the following 640-residue polypeptide: LRR receptor kinase SERL2 (640 aa).

The N-terminal stretch at M1–A22 is a signal peptide. Residues L23–A241 lie on the Extracellular side of the membrane. 2 N-linked (GlcNAc...) asparagine glycosylation sites follow: N94 and N107. 4 LRR repeats span residues L95 to L119, E120 to L143, S145 to L167, and S168 to T191. Residues N153, N166, N179, and N222 are each glycosylated (N-linked (GlcNAc...) asparagine). The helical transmembrane segment at V242 to F262 threads the bilayer. At W263 to R640 the chain is on the cytoplasmic side. Positions F304–E583 constitute a Protein kinase domain. ATP contacts are provided by residues L310–V318 and K332. The Proton acceptor role is filled by D427.

This sequence belongs to the protein kinase superfamily. Ser/Thr protein kinase family. As to quaternary structure, interacts with MSBP1.

Its subcellular location is the cell membrane. The enzyme catalyses L-seryl-[protein] + ATP = O-phospho-L-seryl-[protein] + ADP + H(+). It carries out the reaction L-threonyl-[protein] + ATP = O-phospho-L-threonyl-[protein] + ADP + H(+). Its function is as follows. LRR receptor kinase that may be involved in defense response. The chain is LRR receptor kinase SERL2 from Oryza sativa subsp. japonica (Rice).